The primary structure comprises 154 residues: Small ribosomal subunit protein uS7 (154 aa).

Belongs to the universal ribosomal protein uS7 family.

The protein is Small ribosomal subunit protein uS7 (RPS5) of Nicotiana plumbaginifolia (Leadwort-leaved tobacco).